We begin with the raw amino-acid sequence, 145 residues long: Mini-ribonuclease 3 (145 aa).

Residue Asp27 is part of the active site.

This sequence belongs to the MrnC RNase family. As to quaternary structure, homodimer. It depends on Mg(2+) as a cofactor.

The protein localises to the cytoplasm. Involved in correct processing of both the 5' and 3' ends of 23S rRNA precursor. Processes 30S rRNA precursor transcript even in absence of ribonuclease 3 (Rnc); Rnc processes 30S rRNA into smaller rRNA precursors. In Kosmotoga olearia (strain ATCC BAA-1733 / DSM 21960 / TBF 19.5.1), this protein is Mini-ribonuclease 3.